An 876-amino-acid polypeptide reads, in one-letter code: Radial spoke head 10 homolog B (876 aa).

2 stretches are compositionally biased toward basic and acidic residues: residues 1–16 and 57–66; these read MVKEKKKADKKGDKSA and PKRDSEHTYQ. Positions 1-72 are disordered; sequence MVKEKKKADK…HTYQSEDETQ (72 aa). MORN repeat units follow at residues 86–108, 109–131, 132–154, 155–177, 179–201, 204–226, 227–249, 251–273, 284–306, and 307–329; these read YEGEKVRGLYEGEGFAVFQGGNT, YHGMFSEGLMHGQGTYIWADGLK, YEGDFVKNIPMNHGVYTWPDGST, YEGEVVNGMRNGFGMFKCGTQPV, YIGHWCHGKRHGKGSIYYNQEGT, YEGDWVYNIKKGWGIRCYKSGNI, YEGQWENNMRHGEGRMRWLTTNE, YTGHWEKGIQNGFGTHTWFLKRI, YIGAFVNGFRHGQGKFYYASGAM, and YEGEWVSNKKQGRGRITFKNGRV. Disordered stretches follow at residues 360–386 and 841–876; these read SQRSRQARGSSVSADREPETLRKLDGS and EPPEVPAVQPLTPSPPKEDLVSMQTSKASPGKKKKK. Positions 373-386 are enriched in basic and acidic residues; sequence ADREPETLRKLDGS. Residues 752 to 841 adopt a coiled-coil conformation; that stretch reads EKYEKSKDEQ…FELDITVLKE (90 aa).

As to quaternary structure, interacts with RSPH6A. Does not appear to be part of the axonemal radial spoke complexes 1 or 2.

The protein resides in the cytoplasm. It is found in the cytoskeleton. It localises to the cilium axoneme. The protein localises to the cell projection. Its subcellular location is the cilium. The protein resides in the flagellum. Functionally, may function as part of the axonemal radial spoke complex 3 (RS3). Radial spoke complexes are important for ciliary motility. In Rattus norvegicus (Rat), this protein is Radial spoke head 10 homolog B (Rsph10b).